We begin with the raw amino-acid sequence, 397 residues long: Elongation factor Tu (397 aa).

A tr-type G domain is found at 10-206; it reads KPHVNIGTIG…AVDENIPQPE (197 aa). Residues 19–26 form a G1 region; sequence GHVDHGKT. GTP is bound at residue 19–26; it reads GHVDHGKT. Threonine 26 contributes to the Mg(2+) binding site. Residues 62–66 are G2; that stretch reads GITIS. The G3 stretch occupies residues 83-86; it reads DCPG. GTP contacts are provided by residues 83-87 and 138-141; these read DCPGH and NKAD. Residues 138-141 are G4; the sequence is NKAD. Positions 176 to 178 are G5; it reads SAL.

The protein belongs to the TRAFAC class translation factor GTPase superfamily. Classic translation factor GTPase family. EF-Tu/EF-1A subfamily. In terms of assembly, monomer.

Its subcellular location is the cytoplasm. The catalysed reaction is GTP + H2O = GDP + phosphate + H(+). Functionally, GTP hydrolase that promotes the GTP-dependent binding of aminoacyl-tRNA to the A-site of ribosomes during protein biosynthesis. This Streptomyces cinnamoneus (Streptoverticillium cinnamoneum) protein is Elongation factor Tu.